Reading from the N-terminus, the 395-residue chain is DNA polymerase IV (395 aa).

The 181-residue stretch at 7-187 folds into the UmuC domain; it reads FFHVDIDAFF…LPLKDVWGVG (181 aa). Mg(2+)-binding residues include Asp11 and Asp105. Glu106 is a catalytic residue.

The protein belongs to the DNA polymerase type-Y family. In terms of assembly, monomer. It depends on Mg(2+) as a cofactor.

The protein localises to the cytoplasm. It catalyses the reaction DNA(n) + a 2'-deoxyribonucleoside 5'-triphosphate = DNA(n+1) + diphosphate. Poorly processive, error-prone DNA polymerase involved in untargeted mutagenesis. Copies undamaged DNA at stalled replication forks, which arise in vivo from mismatched or misaligned primer ends. These misaligned primers can be extended by PolIV. Exhibits no 3'-5' exonuclease (proofreading) activity. May be involved in translesional synthesis, in conjunction with the beta clamp from PolIII. The protein is DNA polymerase IV of Treponema denticola (strain ATCC 35405 / DSM 14222 / CIP 103919 / JCM 8153 / KCTC 15104).